The sequence spans 671 residues: NADH-quinone oxidoreductase subunit G (671 aa).

In terms of domain architecture, 2Fe-2S ferredoxin-type spans 1–78 (MIKLNVDGSE…GMVIHTDTPM (78 aa)). Residues Cys34, Cys45, Cys48, and Cys62 each contribute to the [2Fe-2S] cluster site. Positions 78 to 117 (MVKKAREGVMEFLLINHPLDCPICDQGGECNLQDQAFRYG) constitute a 4Fe-4S His(Cys)3-ligated-type domain. [4Fe-4S] cluster is bound by residues His94, Cys98, Cys101, Cys107, Cys146, Cys149, Cys152, and Cys196. The region spanning 215-271 (LKHTASIGVHDAEGSNIRIDSRGDEVMRILPRVNEEINEEWLSDKNRFSYDGLKYQR) is the 4Fe-4S Mo/W bis-MGD-type domain.

The protein belongs to the complex I 75 kDa subunit family. [2Fe-2S] cluster is required as a cofactor. It depends on [4Fe-4S] cluster as a cofactor.

The catalysed reaction is a quinone + NADH + 5 H(+)(in) = a quinol + NAD(+) + 4 H(+)(out). Its function is as follows. NDH-1 shuttles electrons from NADH, via FMN and iron-sulfur (Fe-S) centers, to quinones in the respiratory chain. Couples the redox reaction to proton translocation (for every two electrons transferred, four hydrogen ions are translocated across the cytoplasmic membrane), and thus conserves the redox energy in a proton gradient. This is NADH-quinone oxidoreductase subunit G (nuoG) from Rickettsia conorii (strain ATCC VR-613 / Malish 7).